The following is a 552-amino-acid chain: MQQFFRPVIQDALRSAGIETGQPVQIEKPASAKFGHFSTNIAFLSAKELGKNPRTLAQELIGHLRFPSGSIEKTEVAGPGFINFFLTPPFIMDSLGEVLRQGEAFGRGTSGNGEKAIVEYVSANPTGPLTIGRGRGGVLGDCIANLFEAEGYSVTREYYFNDAGRQMQILGESVRFRYLERCGRKVDFPDTHYQGGYIGDIADRIYQEQGDSLADAEGTGEFKSTAEAIIFSSIKKTLERLGIRHDSFFNEHTLYTPDENGATRNSRVIDALRQKGFIDEYEGATWFLTTKLGQEKNKVLVKSTGEPSYRLPDIAYHLTKYDRGFGVIVNVFGADHIDEYPDVIEALKILGHDTSRIRIAINQFVTTTVDGETVKMSTRKGNADLLDDLIDDVGADATRLFFIMRSKDSHLNFDVDLARKQSKDNPVFYLQYAHARICSLLRMAWSENGFNPEKLPDLALLKTLSSPEELQLALALLDFPDMVRSALRLLEPQKMVDYMHSIAELYHRFYQECPILKAEADTANARLLLSLATRQVLQNGFRILGISAPESM.

Positions 123-133 (ANPTGPLTIGR) match the 'HIGH' region motif.

This sequence belongs to the class-I aminoacyl-tRNA synthetase family. Monomer.

It localises to the cytoplasm. The enzyme catalyses tRNA(Arg) + L-arginine + ATP = L-arginyl-tRNA(Arg) + AMP + diphosphate. The chain is Arginine--tRNA ligase from Chlorobium phaeovibrioides (strain DSM 265 / 1930) (Prosthecochloris vibrioformis (strain DSM 265)).